We begin with the raw amino-acid sequence, 602 residues long: MSRLKRIAGQDPRAGFKEGGRDCGTSVPQGLLKAARKSGQLNLSGRNLSEVPQCVWRINVDIPEEANQNLSFGATERWWEQTDLTKLIISNNKLQSLTDDLRLLPALTVLDIHDNQLTSLPSAIRELQNLQKLNVSHNKLKILPEEITNLRNLKCLYLQHNELTCISEGFEQFSNLEDLDLSNNRLTTVPASFSSLSSLVRLNLSSNELKSLPAEINRMKRLKHLDCNSNLLETIPPELAGMESLELLYLRRNKLRFLPEFPSCSLLKELHVGENQIEMLEAEHLKHLNSILVLDLRDNKLKSVPDEIILLQSLERLDLSNNDISSLPYSLGNLHLKFLALEGNPLRTIRREIINKGTQEVLKYLRSKIKDDGPSQSESATETAMTLPSESRVNIRAIITLKILDYSDKQATLIPDEVFDAVKSNIITSINFSKNQLCEIPKRMVELKEMVSDVNLSFNKLSFISLELCVLQKLTFLDLRNNFLNSLPEEVESLVRLQTINLSFNRFKMLPEVLYRIFTLETILISNNQVGSVDPQKMKMMENLTTLDLQNNDLLQIPPELGNCVNLRTLLLDGNPFRVPRAAILMKGTAGILEYLRDRIPT.

Residues Met1 to Asp22 form a disordered region. A Phosphoserine modification is found at Ser71. LRR repeat units follow at residues Asp83 to Leu104, Ala106 to Leu127, Asn129 to Leu150, Asn152 to Phe173, Asn175 to Leu196, Ser198 to Met219, Arg221 to Met242, Ser244 to Ser265, Leu266 to Lys286, Ser290 to Leu311, Ser313 to His335, Leu336 to Lys356, Thr400 to Ala421, Ile426 to Leu447, Met450 to Gln472, Lys473 to Leu494, Arg496 to Ile517, Thr519 to Met540, Asn543 to Cys564, and Asn566 to Met586.

The protein is Leucine-rich repeat-containing protein 40 (LRRC40) of Pongo abelii (Sumatran orangutan).